Here is a 264-residue protein sequence, read N- to C-terminus: MLECSRDRAVTMEDEQDAHHRRQICDNCDRPNAICLCHVLPADLIPTNTEIIILHHPHESRHKLNTTPLLTKSLLNVTRIPARRLLRRHISTAGGTALPAPPTIYLFPSSPSSPAVTISEFKSLNLLNHREISNPPPLRLIVFDATWKHAKEMVKASEVVLREAGAVRVCLDTEIDASVSGGTIYDSELVLRKEPFGGCVTTAEAVARCLGAIEPDGEEIERKLISVLKEMVRFQSKYLKPMKPRPKLLKKRFQNQQPLEQEEE.

Residues cysteine 25, cysteine 28, cysteine 35, and cysteine 37 each coordinate Zn(2+). Positions 144–147 (DATW) match the DXTW motif. Positions 245–264 (RPKLLKKRFQNQQPLEQEEE) are disordered. Positions 254 to 264 (QNQQPLEQEEE) are enriched in polar residues.

The protein belongs to the TDD superfamily. DTWD2 family.

It catalyses the reaction a uridine in tRNA + S-adenosyl-L-methionine = a 3-[(3S)-3-amino-3-carboxypropyl]uridine in tRNA + S-methyl-5'-thioadenosine + H(+). Its function is as follows. Catalyzes the formation of 3-(3-amino-3-carboxypropyl)uridine (acp3U) at position 20a in the D-loop of several cytoplasmic tRNAs (acp3U(20a)). The sequence is that of tRNA-uridine aminocarboxypropyltransferase A from Arabidopsis thaliana (Mouse-ear cress).